A 1108-amino-acid chain; its full sequence is Folliculin-interacting protein 2 (1108 aa).

One can recognise a uDENN FNIP1/2-type domain in the interval 38–456 (FGLSDIRLLV…TVMPVDHPPI (419 aa)). Disordered regions lie at residues 89-112 (QESSSSSGSSSSGSSSSHGFGGSL), 209-233 (RTGSNLAHSTPVDMPSRGQNEDRDS), 598-635 (SEGVNTSELGHKPEKNRCKRPEQNSEASSMGFQEAEPD), and 649-671 (QNDQEATQDCSSSPPSCEVPRVR). Residues 91–106 (SSSSSGSSSSGSSSSH) are compositionally biased toward low complexity. Phosphoserine is present on residues serine 212 and serine 217. Residues 464-1034 (TSQSVNMLAK…VSSLLQSILQ (571 aa)) form the cDENN FNIP1/2-type domain. The interaction with PRKAA1 stretch occupies residues 540–905 (DDQVINGSKI…DEACVLALLE (366 aa)). Over residues 606 to 620 (LGHKPEKNRCKRPEQ) the composition is skewed to basic and acidic residues. Over residues 652–663 (QEATQDCSSSPP) the composition is skewed to polar residues. Phosphoserine occurs at positions 720, 721, and 723. The region spanning 1044–1099 (FCIMHLEDRLQEMYLKSKMLSEYLRGHTRVHVKELSVVLGIESNDLPLLTAIASTH) is the dDENN FNIP1/2-type domain.

The protein belongs to the FNIP family. In terms of assembly, homodimer and homomultimer. Heterodimer and heteromultimer with FNIP1. Interacts (via C-terminus) with FLCN (via C-terminus). Phosphorylated FLCN is preferentially bound. Component of the lysosomal folliculin complex (LFC), composed of FLCN, FNIP1 (or FNIP2), RagA/RRAGA or RagB/RRAGB GDP-bound, RagC/RRAGC or RagD/RRAGD GTP-bound, and Ragulator. Interacts with PRKAA1, PRKAB1 and PRKAG1 subunits of 5'-AMP-activated protein kinase. Interacts with HSP70, HSP90AA1, STIP1, PTGES3, CDC37, BRAF, GCR and CDK4. Post-translationally, phosphorylated by AMPK.

The protein localises to the lysosome membrane. Its subcellular location is the cytoplasm. Functionally, binding partner of the GTPase-activating protein FLCN: involved in the cellular response to amino acid availability by regulating the non-canonical mTORC1 signaling cascade controlling the MiT/TFE factors TFEB and TFE3. Required to promote FLCN recruitment to lysosomes and interaction with Rag GTPases, leading to activation of the non-canonical mTORC1 signaling. In low-amino acid conditions, component of the lysosomal folliculin complex (LFC) on the membrane of lysosomes, which inhibits the GTPase-activating activity of FLCN, thereby inactivating mTORC1 and promoting nuclear translocation of TFEB and TFE3. Upon amino acid restimulation, disassembly of the LFC complex liberates the GTPase-activating activity of FLCN, leading to activation of mTORC1 and subsequent inactivation of TFEB and TFE3. Together with FLCN, regulates autophagy: following phosphorylation by ULK1, interacts with GABARAP and promotes autophagy. In addition to its role in mTORC1 signaling, also acts as a co-chaperone of HSP90AA1/Hsp90: inhibits the ATPase activity of HSP90AA1/Hsp90, leading to activate both kinase and non-kinase client proteins of HSP90AA1/Hsp90. Acts as a scaffold to load client protein FLCN onto HSP90AA1/Hsp90. Competes with the activating co-chaperone AHSA1 for binding to HSP90AA1, thereby providing a reciprocal regulatory mechanism for chaperoning of client proteins. May play a role in the signal transduction pathway of apoptosis induced by O6-methylguanine-mispaired lesions. This Mus musculus (Mouse) protein is Folliculin-interacting protein 2.